The primary structure comprises 500 residues: Lysine--tRNA ligase (500 aa).

Positions 410 and 417 each coordinate Mg(2+).

The protein belongs to the class-II aminoacyl-tRNA synthetase family. Homodimer. It depends on Mg(2+) as a cofactor.

It is found in the cytoplasm. The enzyme catalyses tRNA(Lys) + L-lysine + ATP = L-lysyl-tRNA(Lys) + AMP + diphosphate. The sequence is that of Lysine--tRNA ligase from Shewanella sp. (strain ANA-3).